A 525-amino-acid chain; its full sequence is Mitochondrial-processing peptidase subunit alpha (525 aa).

A mitochondrion-targeting transit peptide spans 1–33 (MAAMVLAATRLLRGSGSWGRSRPRFGDPAYRRF). At lysine 64 the chain carries N6-succinyllysine. Lysine 299 is subject to N6-acetyllysine.

The protein belongs to the peptidase M16 family. In terms of assembly, heterodimer of PMPCA (alpha) and PMPCB (beta) subunits, forming the mitochondrial processing protease (MPP) in which PMPCA is involved in substrate recognition and binding and PMPCB is the catalytic subunit.

The protein localises to the mitochondrion matrix. The protein resides in the mitochondrion inner membrane. Functionally, substrate recognition and binding subunit of the essential mitochondrial processing protease (MPP), which cleaves the mitochondrial sequence off newly imported precursors proteins. The protein is Mitochondrial-processing peptidase subunit alpha (PMPCA) of Bos taurus (Bovine).